Here is an 837-residue protein sequence, read N- to C-terminus: Anaphase-promoting complex subunit 4 (837 aa).

2 stretches are compositionally biased toward low complexity: residues Asn-59 to Asn-81 and Ser-547 to Asn-581. Disordered regions lie at residues Asn-59–Lys-89 and Ser-547–Asn-588.

The protein belongs to the APC4 family. In terms of assembly, the APC/C is composed of at least 13 subunits that stay tightly associated throughout the cell cycle: anapc1, anapc2, anapc3, anapc4, anapc5, anapc6, anapc7, anapc8, anapc10, anapc11, cdc20, cdc26 and cdh1.

The protein resides in the nucleus. The protein operates within protein modification; protein ubiquitination. Functionally, component of the anaphase promoting complex/cyclosome (APC/C), a cell cycle-regulated E3 ubiquitin-protein ligase complex that controls progression through mitosis and the G1 phase of the cell cycle. The chain is Anaphase-promoting complex subunit 4 (anapc4) from Dictyostelium discoideum (Social amoeba).